The chain runs to 476 residues: Cysteine--tRNA ligase (476 aa).

Cys-36 is a binding site for Zn(2+). Positions 38-48 (PTVYDYAHIGN) match the 'HIGH' region motif. 3 residues coordinate Zn(2+): Cys-221, His-246, and Glu-250. The 'KMSKS' region motif lies at 278 to 282 (KMSKS). Lys-281 lines the ATP pocket.

It belongs to the class-I aminoacyl-tRNA synthetase family. As to quaternary structure, monomer. Zn(2+) is required as a cofactor.

It localises to the cytoplasm. It catalyses the reaction tRNA(Cys) + L-cysteine + ATP = L-cysteinyl-tRNA(Cys) + AMP + diphosphate. This chain is Cysteine--tRNA ligase, found in Chlamydia abortus (strain DSM 27085 / S26/3) (Chlamydophila abortus).